Here is a 711-residue protein sequence, read N- to C-terminus: Polyribonucleotide nucleotidyltransferase (711 aa).

The Mg(2+) site is built by Asp486 and Asp492. Positions 553–612 (PRIHTIKINPDKIKDVIGKGGSVIRALTEETGTTIEIEDDGTVKIAATDGEKAKNAIRRI) constitute a KH domain. One can recognise an S1 motif domain in the interval 622–690 (GRVYNGKVTR…RQGRIRLSIK (69 aa)). The segment at 689-711 (IKEATEQSQPAAAPEAPAAEQGE) is disordered. Low complexity predominate over residues 694–711 (EQSQPAAAPEAPAAEQGE).

Belongs to the polyribonucleotide nucleotidyltransferase family. As to quaternary structure, component of the RNA degradosome, which is a multiprotein complex involved in RNA processing and mRNA degradation. Mg(2+) serves as cofactor.

Its subcellular location is the cytoplasm. The enzyme catalyses RNA(n+1) + phosphate = RNA(n) + a ribonucleoside 5'-diphosphate. Its function is as follows. Involved in mRNA degradation. Catalyzes the phosphorolysis of single-stranded polyribonucleotides processively in the 3'- to 5'-direction. This Escherichia fergusonii (strain ATCC 35469 / DSM 13698 / CCUG 18766 / IAM 14443 / JCM 21226 / LMG 7866 / NBRC 102419 / NCTC 12128 / CDC 0568-73) protein is Polyribonucleotide nucleotidyltransferase.